The primary structure comprises 138 residues: Cysteine desulfuration protein SufE (138 aa).

Cysteine 51 acts as the Cysteine persulfide intermediate in catalysis.

It belongs to the SufE family. In terms of assembly, homodimer. Interacts with SufS.

It localises to the cytoplasm. It functions in the pathway cofactor biosynthesis; iron-sulfur cluster biosynthesis. Participates in cysteine desulfuration mediated by SufS. Cysteine desulfuration mobilizes sulfur from L-cysteine to yield L-alanine and constitutes an essential step in sulfur metabolism for biosynthesis of a variety of sulfur-containing biomolecules. Functions as a sulfur acceptor for SufS, by mediating the direct transfer of the sulfur atom from the S-sulfanylcysteine of SufS, an intermediate product of cysteine desulfuration process. The polypeptide is Cysteine desulfuration protein SufE (Escherichia coli O45:K1 (strain S88 / ExPEC)).